The following is a 670-amino-acid chain: Acetolactate synthase, chloroplastic (670 aa).

2 stretches are compositionally biased toward low complexity: residues 1-48 (MAAA…SSSS) and 55-77 (KSSS…TTPS). A chloroplast-targeting transit peptide spans 1–55 (MAAATTTTTTSSSISFSTKPSPSSSKSPLPISRFSLPFSLNPNKSSSSSRRRGIK). Residues 1 to 94 (MAAATTTTTT…ETFISRFAPD (94 aa)) are disordered. Glutamate 144 is a thiamine diphosphate binding site. Serine 186 contributes to the FAD binding site. Residue glutamine 207 coordinates thiamine diphosphate. The (R)-imazaquin site is built by lysine 220 and arginine 246. Residue arginine 246 coordinates FAD. Chlorimuron-ethyl is bound at residue lysine 256. Residues glycine 308 and 331–332 (TL) contribute to the FAD site. Residue cysteine 340 is modified to Cysteine sulfinic acid (-SO2H). FAD-binding positions include 349 to 352 (LGMH) and 371 to 375 (GVRFD). Residue 376 to 377 (DR) participates in chlorimuron-ethyl binding. FAD is bound by residues 395-396 (DI) and 414-415 (DV). The stretch at 414 to 446 (DVKLALQGMNKVLENRAEELKLDFGVWRNELNV) forms a coiled coil. Residue 487 to 488 (QH) coordinates thiamine diphosphate. Residue 508 to 509 (GG) coordinates FAD. Residues 511–513 (GAM), 538–540 (DGS), and 565–570 (NQHLGM) each bind thiamine diphosphate. Mg(2+)-binding residues include aspartate 538, asparagine 565, and histidine 567. Residues tryptophan 574 and serine 653 each coordinate chlorimuron-ethyl.

The protein belongs to the TPP enzyme family. Homodimer or homotetramer. The acetolactate synthase complex contains both large catalytic subunits and small regulatory subunits. Homodimer. The acetolactate synthase complex contains 4 homodimers of the large catalytic subunits, and 1 homotetramer of the small regulatory subunits. Mg(2+) serves as cofactor. It depends on FAD as a cofactor. Thiamine diphosphate is required as a cofactor.

It is found in the plastid. The protein resides in the chloroplast. It carries out the reaction 2 pyruvate + H(+) = (2S)-2-acetolactate + CO2. The protein operates within amino-acid biosynthesis; L-isoleucine biosynthesis; L-isoleucine from 2-oxobutanoate: step 1/4. Its pathway is amino-acid biosynthesis; L-valine biosynthesis; L-valine from pyruvate: step 1/4. Its activity is regulated as follows. Inhibited by asymmetric aryl disulfides, triazolopyrimidine sulfonanilide compounds, isatin derivatives, and sulfonylurea and imidazolinone herbicides. Insensitive to feed-back inhibition by branched-chain amino acids. Functionally, catalyzes the formation of acetolactate from pyruvate, the first step in valine and isoleucine biosynthesis. The chain is Acetolactate synthase, chloroplastic (ALS) from Arabidopsis thaliana (Mouse-ear cress).